Reading from the N-terminus, the 392-residue chain is G2/mitotic-specific cyclin-B (392 aa).

It belongs to the cyclin family. Cyclin AB subfamily.

Its function is as follows. Essential for the control of the cell cycle at the G2/M (mitosis) transition. Interacts with the CDC2 protein kinase to form MPF. G2/M cyclins accumulate steadily during G2 and are abruptly destroyed at mitosis. This is G2/mitotic-specific cyclin-B from Hydra viridissima (Green hydra).